The sequence spans 403 residues: Bifunctional enzyme IspD/IspF (403 aa).

Residues 1 to 234 (MPTSKRTAAI…ARLAAMLGDI (234 aa)) are 2-C-methyl-D-erythritol 4-phosphate cytidylyltransferase. The 2-C-methyl-D-erythritol 2,4-cyclodiphosphate synthase stretch occupies residues 235-403 (RTGTGYDVHA…SDQEDKGWST (169 aa)). A divalent metal cation contacts are provided by Asp-241 and His-243. Residues 241–243 (DVH) and 267–268 (HS) each bind 4-CDP-2-C-methyl-D-erythritol 2-phosphate. Position 275 (His-275) interacts with a divalent metal cation. Residues 289–291 (DIG), 365–368 (TTSE), Phe-372, and Arg-375 contribute to the 4-CDP-2-C-methyl-D-erythritol 2-phosphate site.

The protein in the N-terminal section; belongs to the IspD/TarI cytidylyltransferase family. IspD subfamily. It in the C-terminal section; belongs to the IspF family. A divalent metal cation serves as cofactor.

The catalysed reaction is 2-C-methyl-D-erythritol 4-phosphate + CTP + H(+) = 4-CDP-2-C-methyl-D-erythritol + diphosphate. It catalyses the reaction 4-CDP-2-C-methyl-D-erythritol 2-phosphate = 2-C-methyl-D-erythritol 2,4-cyclic diphosphate + CMP. Its pathway is isoprenoid biosynthesis; isopentenyl diphosphate biosynthesis via DXP pathway; isopentenyl diphosphate from 1-deoxy-D-xylulose 5-phosphate: step 2/6. It participates in isoprenoid biosynthesis; isopentenyl diphosphate biosynthesis via DXP pathway; isopentenyl diphosphate from 1-deoxy-D-xylulose 5-phosphate: step 4/6. Functionally, bifunctional enzyme that catalyzes the formation of 4-diphosphocytidyl-2-C-methyl-D-erythritol from CTP and 2-C-methyl-D-erythritol 4-phosphate (MEP) (IspD), and catalyzes the conversion of 4-diphosphocytidyl-2-C-methyl-D-erythritol 2-phosphate (CDP-ME2P) to 2-C-methyl-D-erythritol 2,4-cyclodiphosphate (ME-CPP) with a corresponding release of cytidine 5-monophosphate (CMP) (IspF). In Nitrobacter hamburgensis (strain DSM 10229 / NCIMB 13809 / X14), this protein is Bifunctional enzyme IspD/IspF.